The chain runs to 374 residues: Ribosomal RNA large subunit methyltransferase G (374 aa).

This sequence belongs to the methyltransferase superfamily. RlmG family.

It is found in the cytoplasm. The catalysed reaction is guanosine(1835) in 23S rRNA + S-adenosyl-L-methionine = N(2)-methylguanosine(1835) in 23S rRNA + S-adenosyl-L-homocysteine + H(+). Its function is as follows. Specifically methylates the guanine in position 1835 (m2G1835) of 23S rRNA. In Pseudomonas paraeruginosa (strain DSM 24068 / PA7) (Pseudomonas aeruginosa (strain PA7)), this protein is Ribosomal RNA large subunit methyltransferase G.